The sequence spans 194 residues: FAD-linked sulfhydryl oxidase ERV1 (194 aa).

The tract at residues 44–72 (LSLSLSPPPTPPSPPPPPPEVLKKDSKAA) is disordered. Pro residues predominate over residues 49-63 (SPPPTPPSPPPPPPE). The region spanning 72–172 (APLTKEEVGR…FPCQRVNARW (101 aa)) is the ERV/ALR sulfhydryl oxidase domain. Lys-76, Arg-81, Trp-84, Glu-121, His-125, Cys-148, His-151, Asn-152, Asn-155, Lys-160, and Arg-171 together coordinate FAD. Cysteines 119 and 122 form a disulfide. A disulfide bridge connects residues Cys-148 and Cys-165. Cys-177 and Cys-182 are joined by a disulfide. The Required for dimerization and substrate specificity motif lies at 177–182 (CPERSC).

As to quaternary structure, homodimer. Requires FAD as cofactor. In terms of processing, contains three disulfide bonds; one catalytic disulfide (Cys-119 to Cys-122), one structural disulfide (Cys-148 to Cys-165), and one shuttle disulfide (Cys-177 to Cys-182).

Its subcellular location is the mitochondrion. It carries out the reaction 2 R'C(R)SH + O2 = R'C(R)S-S(R)CR' + H2O2. Functionally, FAD-dependent sulfhydryl oxidase that catalyzes disulfide bond formation. Oxidizes thioredoxin in vitro. Required for the import and folding of small cysteine-containing proteins in the mitochondrial intermembrane space, and can act independently of the oxidoreductase MIA40. Can oxidize the cytochrome c oxidase assembly protein COX19, a typical substrate of MIA40. The sequence is that of FAD-linked sulfhydryl oxidase ERV1 from Oryza sativa subsp. japonica (Rice).